The primary structure comprises 648 residues: Threonine--tRNA ligase (648 aa).

In terms of domain architecture, TGS spans 1-63 (MSQISLTFPD…AASGRIAINT (63 aa)). Residues 247–544 (DHRKLGREME…LIENYSGKLP (298 aa)) are catalytic. Zn(2+) is bound by residues Cys-344, His-395, and His-521.

It belongs to the class-II aminoacyl-tRNA synthetase family. Homodimer. Requires Zn(2+) as cofactor.

The protein localises to the cytoplasm. It carries out the reaction tRNA(Thr) + L-threonine + ATP = L-threonyl-tRNA(Thr) + AMP + diphosphate + H(+). Its function is as follows. Catalyzes the attachment of threonine to tRNA(Thr) in a two-step reaction: L-threonine is first activated by ATP to form Thr-AMP and then transferred to the acceptor end of tRNA(Thr). Also edits incorrectly charged L-seryl-tRNA(Thr). In Paracoccus denitrificans (strain Pd 1222), this protein is Threonine--tRNA ligase.